The sequence spans 89 residues: MSLDKGTKEEITKKFQLHEKDTGSADVQIAILTEHITELKQHLKRSPKDQNSRLALLKLVGQRRKLLEYLNSTDTERYKNLITRLNLRK.

It belongs to the universal ribosomal protein uS15 family. As to quaternary structure, part of the 30S ribosomal subunit. Forms a bridge to the 50S subunit in the 70S ribosome, contacting the 23S rRNA.

In terms of biological role, one of the primary rRNA binding proteins, it binds directly to 16S rRNA where it helps nucleate assembly of the platform of the 30S subunit by binding and bridging several RNA helices of the 16S rRNA. Functionally, forms an intersubunit bridge (bridge B4) with the 23S rRNA of the 50S subunit in the ribosome. The sequence is that of Small ribosomal subunit protein uS15 from Chlamydia felis (strain Fe/C-56) (Chlamydophila felis).